The primary structure comprises 542 residues: Mitogen-activated protein kinase 14 (542 aa).

One can recognise a Protein kinase domain in the interval 13–304; sequence YKIEEVIGKG…AEEALADPYF (292 aa). Residues 19 to 27 and Lys42 each bind ATP; that span reads IGKGSYGVV. The active-site Proton acceptor is the Asp139. At Thr175 the chain carries Phosphothreonine. Positions 175–177 match the TXY motif; it reads TDY. Tyr177 is subject to Phosphotyrosine. 2 disordered regions span residues 388–412 and 482–542; these read STAA…DNRP and RNPA…SGHW. The segment covering 488 to 507 has biased composition (polar residues); it reads PNSSVPLGSSYPRRNQTCKS.

It belongs to the protein kinase superfamily. CMGC Ser/Thr protein kinase family. MAP kinase subfamily. Post-translationally, dually phosphorylated on Thr-175 and Tyr-177, which activates the enzyme.

The enzyme catalyses L-seryl-[protein] + ATP = O-phospho-L-seryl-[protein] + ADP + H(+). It catalyses the reaction L-threonyl-[protein] + ATP = O-phospho-L-threonyl-[protein] + ADP + H(+). Its activity is regulated as follows. Activated by threonine and tyrosine phosphorylation. The sequence is that of Mitogen-activated protein kinase 14 (MPK14) from Oryza sativa subsp. japonica (Rice).